The sequence spans 446 residues: Na(+)-translocating NADH-quinone reductase subunit A (446 aa).

The protein belongs to the NqrA family. As to quaternary structure, composed of six subunits; NqrA, NqrB, NqrC, NqrD, NqrE and NqrF.

It carries out the reaction a ubiquinone + n Na(+)(in) + NADH + H(+) = a ubiquinol + n Na(+)(out) + NAD(+). NQR complex catalyzes the reduction of ubiquinone-1 to ubiquinol by two successive reactions, coupled with the transport of Na(+) ions from the cytoplasm to the periplasm. NqrA to NqrE are probably involved in the second step, the conversion of ubisemiquinone to ubiquinol. The protein is Na(+)-translocating NADH-quinone reductase subunit A of Histophilus somni (strain 129Pt) (Haemophilus somnus).